Here is a 522-residue protein sequence, read N- to C-terminus: Apolipoprotein N-acyltransferase (522 aa).

6 helical membrane passes run 17 to 37 (YFTY…FSPF), 61 to 81 (TALL…VSWL), 98 to 118 (FLVG…TYLV), 127 to 147 (VIFA…FTGF), 164 to 184 (IAPI…SAVI), and 197 to 217 (LKLV…SAYS). Residues 236-483 (AQGNIEQNLK…ETTLTYKIAP (248 aa)) form the CN hydrolase domain. Glu276 (proton acceptor) is an active-site residue. The active site involves Lys342. Cys394 (nucleophile) is an active-site residue. Residues 495–515 (NMPLYALSLLFLLLHSMMAFI) form a helical membrane-spanning segment.

This sequence belongs to the CN hydrolase family. Apolipoprotein N-acyltransferase subfamily.

Its subcellular location is the cell inner membrane. The catalysed reaction is N-terminal S-1,2-diacyl-sn-glyceryl-L-cysteinyl-[lipoprotein] + a glycerophospholipid = N-acyl-S-1,2-diacyl-sn-glyceryl-L-cysteinyl-[lipoprotein] + a 2-acyl-sn-glycero-3-phospholipid + H(+). It functions in the pathway protein modification; lipoprotein biosynthesis (N-acyl transfer). Functionally, catalyzes the phospholipid dependent N-acylation of the N-terminal cysteine of apolipoprotein, the last step in lipoprotein maturation. This is Apolipoprotein N-acyltransferase from Haemophilus influenzae (strain ATCC 51907 / DSM 11121 / KW20 / Rd).